The following is an 88-amino-acid chain: Small ribosomal subunit protein uS15 (88 aa).

Belongs to the universal ribosomal protein uS15 family. Part of the 30S ribosomal subunit. Forms a bridge to the 50S subunit in the 70S ribosome, contacting the 23S rRNA.

Functionally, one of the primary rRNA binding proteins, it binds directly to 16S rRNA where it helps nucleate assembly of the platform of the 30S subunit by binding and bridging several RNA helices of the 16S rRNA. Its function is as follows. Forms an intersubunit bridge (bridge B4) with the 23S rRNA of the 50S subunit in the ribosome. The polypeptide is Small ribosomal subunit protein uS15 (Borreliella burgdorferi (strain ATCC 35210 / DSM 4680 / CIP 102532 / B31) (Borrelia burgdorferi)).